The sequence spans 358 residues: Pyruvate dehydrogenase E1 component subunit alpha (358 aa).

In terms of assembly, heterodimer of an alpha and a beta chain. Thiamine diphosphate is required as a cofactor.

The enzyme catalyses N(6)-[(R)-lipoyl]-L-lysyl-[protein] + pyruvate + H(+) = N(6)-[(R)-S(8)-acetyldihydrolipoyl]-L-lysyl-[protein] + CO2. In terms of biological role, the pyruvate dehydrogenase complex catalyzes the overall conversion of pyruvate to acetyl-CoA and CO(2). It contains multiple copies of three enzymatic components: pyruvate dehydrogenase (E1), dihydrolipoamide acetyltransferase (E2) and lipoamide dehydrogenase (E3). This Mycoplasma pneumoniae (strain ATCC 29342 / M129 / Subtype 1) (Mycoplasmoides pneumoniae) protein is Pyruvate dehydrogenase E1 component subunit alpha (pdhA).